The chain runs to 254 residues: 23S rRNA (guanosine-2'-O-)-methyltransferase RlmB (254 aa).

Residues G198, I218, and L227 each coordinate S-adenosyl-L-methionine.

The protein belongs to the class IV-like SAM-binding methyltransferase superfamily. RNA methyltransferase TrmH family. RlmB subfamily. As to quaternary structure, homodimer.

The protein localises to the cytoplasm. It carries out the reaction guanosine(2251) in 23S rRNA + S-adenosyl-L-methionine = 2'-O-methylguanosine(2251) in 23S rRNA + S-adenosyl-L-homocysteine + H(+). In terms of biological role, specifically methylates the ribose of guanosine 2251 in 23S rRNA. In Blochmanniella floridana, this protein is 23S rRNA (guanosine-2'-O-)-methyltransferase RlmB.